The primary structure comprises 652 residues: O-fucosyltransferase 15 (652 aa).

Residues 91–111 (TAAFVIVLVGFFIFVNWFMLS) form a helical; Signal-anchor for type II membrane protein membrane-spanning segment. N-linked (GlcNAc...) asparagine glycans are attached at residues Asn139, Asn169, and Asn251. 426 to 428 (HLR) lines the substrate pocket. Residues Asn464, Asn546, and Asn607 are each glycosylated (N-linked (GlcNAc...) asparagine).

This sequence belongs to the glycosyltransferase GT106 family.

It localises to the membrane. Its pathway is glycan metabolism. In Arabidopsis thaliana (Mouse-ear cress), this protein is O-fucosyltransferase 15.